The chain runs to 226 residues: Eukaryotic translation initiation factor 3 subunit K (226 aa).

The region spanning 44–202 (YSLEVNLCLL…IVLPQNEFNH (159 aa)) is the PCI domain.

The protein belongs to the eIF-3 subunit K family. In terms of assembly, component of the eukaryotic translation initiation factor 3 (eIF-3) complex.

It is found in the cytoplasm. In terms of biological role, component of the eukaryotic translation initiation factor 3 (eIF-3) complex, which is involved in protein synthesis of a specialized repertoire of mRNAs and, together with other initiation factors, stimulates binding of mRNA and methionyl-tRNAi to the 40S ribosome. The eIF-3 complex specifically targets and initiates translation of a subset of mRNAs involved in cell proliferation. The polypeptide is Eukaryotic translation initiation factor 3 subunit K (TIF3K1) (Arabidopsis thaliana (Mouse-ear cress)).